The chain runs to 366 residues: Sodium-potassium/proton antiporter ChaA (366 aa).

The Cytoplasmic portion of the chain corresponds to 1 to 16 (MSNAQEAVKTRHKETS). Helical transmembrane passes span 17–37 (LIFP…QTLP) and 38–58 (VVIA…FSVV). The Cytoplasmic segment spans residues 59-74 (RHADVLAHRLGEPYGS). The helical transmembrane segment at 75-95 (LILSLSVVILEVSLISALMAT) threads the bilayer. The Periplasmic segment spans residues 96–106 (GDAAPTLMRDT). Residues 107-127 (LYSIIMIVTGGLVGFSLLLGG) form a helical membrane-spanning segment. The Cytoplasmic portion of the chain corresponds to 128–143 (RKFATQYMNLFGIKQY). Residues 144–164 (LIALFPLAIIVLVFPMALPAA) form a helical membrane-spanning segment. The Periplasmic portion of the chain corresponds to 165–167 (NFS). Residues 168 to 188 (TGQALLVALISAAMYGVFLLI) traverse the membrane as a helical segment. At 189 to 216 (QTKTHQSLFVYEHEDDSDDDDPHHGKPS) the chain is on the cytoplasmic side. The helical transmembrane segment at 217 to 237 (AHSSLWHAIWLIIHLIAVIAV) threads the bilayer. The Periplasmic portion of the chain corresponds to 238–255 (TKMNASSLETLLDSMNAP). The chain crosses the membrane as a helical span at residues 256–276 (VAFTGFLVALLILSPEGLGAL). The Cytoplasmic segment spans residues 277-290 (KAVLNNQVQRAMNL). The helical transmembrane segment at 291–311 (FFGSVLATISLTVPVVTLIAF) threads the bilayer. Over 312–318 (MTGNELQ) the chain is Periplasmic. Residues 319-339 (FALGAPEMVVMVASLVLCHIS) traverse the membrane as a helical segment. The Cytoplasmic portion of the chain corresponds to 340–345 (FSTGRT). The helical transmembrane segment at 346 to 366 (NVLNGAAHLALFAAYLMTIFA) threads the bilayer.

This sequence belongs to the Ca(2+):cation antiporter (CaCA) (TC 2.A.19) family.

The protein resides in the cell inner membrane. It catalyses the reaction Na(+)(in) + H(+)(out) = Na(+)(out) + H(+)(in). It carries out the reaction K(+)(in) + H(+)(out) = K(+)(out) + H(+)(in). The enzyme catalyses Ca(2+)(in) + H(+)(out) = Ca(2+)(out) + H(+)(in). Pronounced pH dependence with sodium as substrate. Ca(2+)/H(+) and Na(+)/H(+) antiporter activities are both inhibited by magnesium. Ca(2+)/H(+) activity is inhibited by the proton ionophore carbonyl cyanide m-chlorophenylhydrazone (CCCP). Its function is as follows. Sodium exporter that functions mainly at alkaline pH. Can also function as a potassium/proton and calcium/proton antiporter at alkaline pH. Does not play a major role in calcium export. The K(+)/H(+) antiporter activity may enable E.coli to adapt to K(+) salinity stress and to maintain K(+) homeostasis. The chain is Sodium-potassium/proton antiporter ChaA from Escherichia coli (strain K12).